A 225-amino-acid chain; its full sequence is MTAAAYRNTLLSLLCLTAGIVDVIGYLSLGHVFTANMTGNIVLLGLAIGKSIQVTVFNSLTALIGFICGVIIATLMVGKAENTLWPSAVTKALALEAFILFVFACLSFYRAFVPVHILIILMSISMGIQTTAAKKLGIAGISSTVLTGTLASLLEDISGRLFFKKQKKTFLRDTVLRALAIILYCVGAIIVALAEPDFYHFIIWVPIVLIFGIMMTAKLKLSGEK.

6 helical membrane-spanning segments follow: residues 10-30 (LLSL…LSLG), 56-76 (VFNS…ATLM), 99-119 (ILFV…HILI), 137-157 (GIAG…LEDI), 174-194 (TVLR…VALA), and 197-217 (DFYH…MMTA).

This sequence belongs to the UPF0700 family.

It localises to the cell membrane. In Bacillus subtilis (strain 168), this protein is UPF0700 transmembrane protein YoaK (yoaK).